An 862-amino-acid polypeptide reads, in one-letter code: DNA mismatch repair protein MutS (862 aa).

613 to 620 (GPNMAGKS) contributes to the ATP binding site.

The protein belongs to the DNA mismatch repair MutS family.

Its function is as follows. This protein is involved in the repair of mismatches in DNA. It is possible that it carries out the mismatch recognition step. This protein has a weak ATPase activity. This Desulfitobacterium hafniense (strain Y51) protein is DNA mismatch repair protein MutS.